Consider the following 189-residue polypeptide: Large ribosomal subunit protein bL9 (189 aa).

The protein belongs to the bacterial ribosomal protein bL9 family.

Binds to the 23S rRNA. The sequence is that of Large ribosomal subunit protein bL9 from Beijerinckia indica subsp. indica (strain ATCC 9039 / DSM 1715 / NCIMB 8712).